The following is a 564-amino-acid chain: MAPTLKQAYRRRWWMACTAVVENLFFSAVLLGWASLLIMLKKEGFYSSLCPAENRTNTTQDEQHQWTSCDQQEKMLNLGFTIGSFLLSATTLPLGILMDRFGPRPLRLVGSACFAASCTLMALASRDTEVLSPLIFLALSLNGFAGICLTFTSLTLPNMFGNLRSTFMALMIGSYASSAITFPGIKLIYDAGVPFTVIMFTWSGLACLIFLNCALNWPAEAFPAPEEVDYTKKIKLIGLALDHKVTGDRFYTHVTIVGQRLSQKSPSLEEGADAFISSPDIPGTSEETPEKSVPFRKSLCSPIFLWSLVTMGMTQLRVIFYMGAMNKILEFIVTGGKERETNEQRQKVEETVEFYSSIFGVMQLLCLLTCPLIGYIMDWRIKDCVDAPTEGTLNENASFGDARDGASTKFTRPRYRKVQKLTNAINAFTLTNILLVGFGIACLIKNLHLQLLAFVLHTIVRGFFHSACGGLYAAVFPSNHFGTLTGLQSLISAVFALLQQLLFMAMVGPLHGDPFWVNLGLLLLSFLGFLLPSYLYYYRSRLQREYATNLVDPQKVLNTSKVAT.

Residues 20–40 form a helical membrane-spanning segment; the sequence is VVENLFFSAVLLGWASLLIML. N-linked (GlcNAc...) asparagine glycans are attached at residues Asn-54 and Asn-57. The next 5 membrane-spanning stretches (helical) occupy residues 78 to 98, 105 to 124, 131 to 151, 165 to 185, and 191 to 211; these read LGFT…GILM, PLRL…MALA, LSPL…CLTF, STFM…FPGI, and AGVP…LIFL. Ser-262 and Ser-267 each carry phosphoserine. The next 2 membrane-spanning stretches (helical) occupy residues 303 to 323 and 357 to 377; these read IFLW…FYMG and SIFG…GYIM. Asn-396 carries N-linked (GlcNAc...) asparagine glycosylation. Phosphoserine is present on Ser-398. 4 helical membrane passes run 424–444, 451–471, 490–510, and 515–535; these read AINA…ACLI, LLAF…CGGL, LISA…VGPL, and FWVN…PSYL. The N-linked (GlcNAc...) asparagine glycan is linked to Asn-558.

This sequence belongs to the SLC43A transporter (TC 2.A.1.44) family. As to expression, expressed in the kidney cortex as well as liver, pancreas, and skeletal muscle. In kidney expressed in the glomerular tuft (at protein level). Expressed in liver, skeletal muscle and pancreas (at protein level).

It localises to the cell membrane. Its subcellular location is the apical cell membrane. It is found in the endoplasmic reticulum membrane. It catalyses the reaction D-leucine(in) = D-leucine(out). The catalysed reaction is L-leucine(in) = L-leucine(out). It carries out the reaction L-isoleucine(in) = L-isoleucine(out). The enzyme catalyses L-methionine(in) = L-methionine(out). It catalyses the reaction L-phenylalanine(in) = L-phenylalanine(out). The catalysed reaction is L-valine(in) = L-valine(out). In terms of biological role, uniport that mediates the transport of neutral amino acids such as L-leucine, L-isoleucine, L-valine, and L-phenylalanine. The transport activity is sodium ions-independent, electroneutral and mediated by a facilitated diffusion. The sequence is that of Large neutral amino acids transporter small subunit 3 from Mus musculus (Mouse).